The sequence spans 1208 residues: MKSLAGHVVKYGKHRERRSFARISEVLELPNLIEIQTDSYQWFLDEGLREMFEDILPIDDFNGNLSLEFVDYELKEPKYTVAEARAHDANYSAPLHVTLRLTNRETGEIKAQEVFFGDFPLMTEQGTFIINGAERVIVSQLVRSPGVYFHGKVDKNGKEGFGSTVIPNRGAWLEMETDAKDISYVRIDRTRKIPLTVLVRALGFGSDDTIFEIFGDSETLRNTVEKDLHKNASDSRTEEGLKDVYERLRPGEPKTADSSRNLLNARFFDPKRYDLANVGRYKVNKKLDLKTRLLNLTLAETLVDPETGEIIVEKGTVLTHQVMETLAPFIDNGLNSGTYYPSEDGVVTDPMTVQVIKVFSPRDPEREVNVIGNGYPEAAVKTVRPADIIASMSYFLNLMEGIGNVDDIDHLGNRRIRSVGELLQNQFRIGLARMERVVRERMSIQDTETLTPQQLINIRPVVASIKEFFGSSQLSQFMDQTNPLGELTHKRRLSALGPGGLTRDRAGYEVRDVHYSHYGRMCPIETPEGPNIGLINSLSSYAKVNKFGFIETPYRRVDRETGRVTDQIDYLTADIEDHYIVAQANSPLNEDGTFAQDVVMARAQSENLEVSIDKVDYMDVSPKQVVAVATACIPFLENDDSNRALMGANMQRQAVPLINPQAPWVGTGMEYKSAHDSGAALLCKHDGVVEYVDASEIRVRRDNGALDKYDVTKFRRSNSGTSYNQRPIVHLGEKVEKGVTLADGPSMEQGEMALGQNVLVGFMTWEGYNYEDAIIMSRRLVKDDVYTSIHIEEYESEARDTKLGPEEITREIPNVGEDALKDLDEMGIIRIGAEVQDGDLLVGKVTPKGVTELSAEERLLHAIFGEKAREVRDTSLRVPHGGGGIVHDVKIFTREAGDELSPGVNMLVRVYIVQKRKIHEGDKMAGRHGNKGVVSRIMPEEDMPFLPDGTPIDIMLNPLGVPSRMNIGQVLELHLGMAARQLGIHVATPVFDGASDEDVWETVREAGMASDAKTVLYDGRTGEPFDGRVSVGVMYMIKLAHMVDDKLHARSIGPYSLVTQQPLGGKAQFGGQRFGEMEVWALEAYGAAYTLQEILTYKSDDVVGRVKTYEAIVKGEPIPKPGVPESFRVLVKELQSLGLDMRVLDIEETEIELRDMDDEDDDLITVDALTKFAEQQTAKELEKKAAEQVEDEKDDVIQNFETAEDNLD.

Residues 1182–1208 (EKKAAEQVEDEKDDVIQNFETAEDNLD) form a disordered region.

The protein belongs to the RNA polymerase beta chain family. As to quaternary structure, the RNAP catalytic core consists of 2 alpha, 1 beta, 1 beta' and 1 omega subunit. When a sigma factor is associated with the core the holoenzyme is formed, which can initiate transcription.

It carries out the reaction RNA(n) + a ribonucleoside 5'-triphosphate = RNA(n+1) + diphosphate. Its function is as follows. DNA-dependent RNA polymerase catalyzes the transcription of DNA into RNA using the four ribonucleoside triphosphates as substrates. The chain is DNA-directed RNA polymerase subunit beta from Enterococcus faecium (Streptococcus faecium).